The primary structure comprises 326 residues: Peroxidase 41 (326 aa).

An N-terminal signal peptide occupies residues 1–20 (MSSVINVLFVVLVFVPSIYS). The N-linked (GlcNAc...) asparagine glycan is linked to asparagine 25. 4 disulfides stabilise this stretch: cysteine 35-cysteine 116, cysteine 68-cysteine 73, cysteine 122-cysteine 318, and cysteine 201-cysteine 228. The Proton acceptor role is filled by histidine 66. Residues aspartate 67, glycine 72, aspartate 74, and serine 76 each coordinate Ca(2+). Proline 164 provides a ligand contact to substrate. An N-linked (GlcNAc...) asparagine glycan is attached at asparagine 167. Residue histidine 194 participates in heme b binding. Threonine 195 is a Ca(2+) binding site. Asparagine 234 carries an N-linked (GlcNAc...) asparagine glycan. Ca(2+) is bound by residues aspartate 242, threonine 245, and aspartate 250. A glycan (N-linked (GlcNAc...) asparagine) is linked at asparagine 286.

It belongs to the peroxidase family. Classical plant (class III) peroxidase subfamily. Requires heme b as cofactor. Ca(2+) is required as a cofactor.

It is found in the secreted. It catalyses the reaction 2 a phenolic donor + H2O2 = 2 a phenolic radical donor + 2 H2O. In terms of biological role, removal of H(2)O(2), oxidation of toxic reductants, biosynthesis and degradation of lignin, suberization, auxin catabolism, response to environmental stresses such as wounding, pathogen attack and oxidative stress. These functions might be dependent on each isozyme/isoform in each plant tissue. This chain is Peroxidase 41 (PER41), found in Arabidopsis thaliana (Mouse-ear cress).